A 141-amino-acid chain; its full sequence is Hemoglobin subunit alpha-3 (141 aa).

The Globin domain maps to 1 to 141 (VLSPADKTNV…VSTVLTSKYR (141 aa)). Position 58 (His-58) interacts with O2. Heme b is bound at residue His-87.

Belongs to the globin family. Heterotetramer of two alpha chains and two beta chains. Red blood cells.

In terms of biological role, involved in oxygen transport from the lung to the various peripheral tissues. The chain is Hemoglobin subunit alpha-3 from Pan troglodytes (Chimpanzee).